A 438-amino-acid chain; its full sequence is Myosin light chain kinase, smooth muscle (438 aa).

A Protein kinase domain is found at Phe1–Leu241. Lys15 serves as a coordination point for ATP. Tyr97 carries the post-translational modification Phosphotyrosine; by ABL1. Asp107 functions as the Proton acceptor in the catalytic mechanism. A Phosphotyrosine; by ABL1 modification is found at Tyr157. Residues Thr233 to Thr296 form a calmodulin-binding region. A phosphoserine mark is found at Ser281, Ser282, Ser294, Ser295, and Ser298. The telokin stretch occupies residues Met283–Glu438. The tract at residues Leu289–Glu309 is disordered. A compositionally biased stretch (polar residues) spans Arg292–Leu303. At Thr300 the chain carries Phosphothreonine. The residue at position 301 (Ser301) is a Phosphoserine. One can recognise an Ig-like C2-type domain in the interval Pro331–Ile420. A disulfide bridge links Cys352 with Cys404.

The protein belongs to the protein kinase superfamily. CAMK Ser/Thr protein kinase family. In terms of assembly, all isoforms including Telokin bind calmodulin. Interacts with SVIL. Interacts with CTTN; this interaction is reduced during thrombin-induced endothelial cell (EC) contraction but is promoted by the barrier-protective agonist sphingosine 1-phosphate (S1P) within lamellipodia. A complex made of ABL1, CTTN and MYLK regulates cortical actin-based cytoskeletal rearrangement critical to sphingosine 1-phosphate (S1P)-mediated endothelial cell (EC) barrier enhancement. Binds to NAA10/ARD1 and PTK2B/PYK2. Requires Mg(2+) as cofactor. It depends on Ca(2+) as a cofactor. Post-translationally, the C-terminus is deglutamylated by AGTPBP1/CCP1, AGBL1/CCP4 and AGBL4/CCP6, leading to the formation of Myosin light chain kinase, smooth muscle, deglutamylated form. The consequences of C-terminal deglutamylation are unknown. In terms of processing, can probably be down-regulated by phosphorylation. Tyrosine phosphorylation by ABL1 increases kinase activity, reverses MLCK-mediated inhibition of Arp2/3-mediated actin polymerization, and enhances CTTN-binding. Phosphorylation by SRC promotes CTTN binding.

Its subcellular location is the cytoplasm. The protein localises to the cell projection. It is found in the lamellipodium. The protein resides in the cleavage furrow. It localises to the cytoskeleton. Its subcellular location is the stress fiber. It carries out the reaction L-seryl-[myosin light chain] + ATP = O-phospho-L-seryl-[myosin light chain] + ADP + H(+). The enzyme catalyses L-threonyl-[myosin light chain] + ATP = O-phospho-L-threonyl-[myosin light chain] + ADP + H(+). Its function is as follows. Calcium/calmodulin-dependent myosin light chain kinase implicated in smooth muscle contraction via phosphorylation of myosin light chains (MLC). Also regulates actin-myosin interaction through a non-kinase activity. Phosphorylates PTK2B/PYK2 and myosin light-chains. Involved in the inflammatory response (e.g. apoptosis, vascular permeability, leukocyte diapedesis), cell motility and morphology, airway hyperreactivity and other activities relevant to asthma. Required for tonic airway smooth muscle contraction that is necessary for physiological and asthmatic airway resistance. Necessary for gastrointestinal motility. Implicated in the regulation of endothelial as well as vascular permeability, probably via the regulation of cytoskeletal rearrangements. In the nervous system it has been shown to control the growth initiation of astrocytic processes in culture and to participate in transmitter release at synapses formed between cultured sympathetic ganglion cells. Critical participant in signaling sequences that result in fibroblast apoptosis. Plays a role in the regulation of epithelial cell survival. Required for epithelial wound healing, especially during actomyosin ring contraction during purse-string wound closure. Mediates RhoA-dependent membrane blebbing. Triggers TRPC5 channel activity in a calcium-dependent signaling, by inducing its subcellular localization at the plasma membrane. Promotes cell migration (including tumor cells) and tumor metastasis. PTK2B/PYK2 activation by phosphorylation mediates ITGB2 activation and is thus essential to trigger neutrophil transmigration during acute lung injury (ALI). May regulate optic nerve head astrocyte migration. Probably involved in mitotic cytoskeletal regulation. Regulates tight junction probably by modulating ZO-1 exchange in the perijunctional actomyosin ring. Mediates burn-induced microvascular barrier injury; triggers endothelial contraction in the development of microvascular hyperpermeability by phosphorylating MLC. Essential for intestinal barrier dysfunction. Mediates Giardia spp.-mediated reduced epithelial barrier function during giardiasis intestinal infection via reorganization of cytoskeletal F-actin and tight junctional ZO-1. Necessary for hypotonicity-induced Ca(2+) entry and subsequent activation of volume-sensitive organic osmolyte/anion channels (VSOAC) in cervical cancer cells. The protein is Myosin light chain kinase, smooth muscle (MYLK) of Ovis aries (Sheep).